The chain runs to 638 residues: Chaperone protein DnaK (638 aa).

Threonine 197 is subject to Phosphothreonine; by autocatalysis. The tract at residues 598-638 (QQSAPSGAAAGPDEGAPSGSGGTSGTRGGDDVIDAEFTETK) is disordered. The segment covering 615–624 (SGSGGTSGTR) has biased composition (gly residues). Positions 628–638 (DVIDAEFTETK) are enriched in acidic residues.

Belongs to the heat shock protein 70 family.

Its function is as follows. Acts as a chaperone. This Gloeobacter violaceus (strain ATCC 29082 / PCC 7421) protein is Chaperone protein DnaK.